The following is a 569-amino-acid chain: Dicarboxylate transporter 1, chloroplastic (569 aa).

Residues 1 to 93 (MASMALSLTS…VPSPAPVSAP (93 aa)) constitute a chloroplast transit peptide. Residues 23 to 74 (SLKPLSKSQPSISLPSLRSNASKSPSLSHKHFLSPPSLLLPHKLKPISASSP) show a composition bias toward low complexity. Residues 23 to 93 (SLKPLSKSQP…VPSPAPVSAP (71 aa)) form a disordered region. Positions 75–90 (TNPPPPPAPVPSPAPV) are enriched in pro residues. 12 consecutive transmembrane segments (helical) span residues 106–126 (PLLASILTGVIIWFIPTPEGV), 134–154 (LAIFLSTIVGIITQPLPLGAV), 172–192 (AAFSAFGDPIPWLIALAFFFA), 241–261 (AGGIFLPLVKSLCIACGSNVG), 268–288 (LGAWLMLTCFQTSVISSSMFL), 317–337 (AAFVPGLVSLIVVPLLLYVVY), 367–387 (IMAVTLLLTVGLWVFGGKLGV), 388–408 (DAVTAAILGLSVLLITGVVTW), 423–443 (WFAALIAMAGYLNKYGLITWF), 450–470 (VVGGLGLSWQMSFGVLVLLYF), 490–510 (FLSVASALGTPPFLAAIVLSF), and 543–563 (YGFLISIVNLIIWLGVGGLWW).

This sequence belongs to the SLC13A/DASS transporter (TC 2.A.47) family. DIT1 subfamily. Monomer. Post-translationally, the N-terminus is blocked. Expressed in leaves.

Its subcellular location is the plastid. The protein localises to the chloroplast inner membrane. In terms of biological role, 2-oxoglutarate/malate translocator that transports carbon skeletons into chloroplasts for net glutamate synthesis. This translocator exchanges malate for internal succinate, fumarate and 2-oxoglutarate but not for aspartate and glutamate. Involved with DIT2 in primary ammonia assimilation and in the re-assimilation of ammonia generated by the photorespiratory pathway. Imports 2-oxoglutarate into plastids as precursor for ammonia assimilation. 2-oxoglutarate is converted to glutamate, the end product of ammonia assimilation, which is exported to the cytosol by DIT2. The protein is Dicarboxylate transporter 1, chloroplastic (DIT1) of Spinacia oleracea (Spinach).